The primary structure comprises 919 residues: Envelope glycoprotein B (919 aa).

A signal peptide spans 1-28; the sequence is MSKDSTSLGVRTIVIACLVLLGCCIVEA. The Virion surface portion of the chain corresponds to 29–788; the sequence is VPTTPSSQPS…SGIASFINNP (760 aa). Disulfide bonds link Cys81/Cys586, Cys98/Cys542, Cys172/Cys237, Cys330/Cys378, and Cys607/Cys647. Asn106 carries an N-linked (GlcNAc...) asparagine; by host glycan. An involved in fusion and/or binding to host membrane region spans residues 138–144; sequence VWKGYSH. Residue Asn216 is glycosylated (N-linked (GlcNAc...) asparagine; by host). Residues 223–231 form an involved in fusion and/or binding to host membrane region; sequence GWMPWRHYT. 7 N-linked (GlcNAc...) asparagine; by host glycosylation sites follow: Asn321, Asn364, Asn438, Asn456, Asn493, Asn496, and Asn499. Residues Asn666 and Asn688 are each glycosylated (N-linked (GlcNAc...) asparagine; by host). Hydrophobic membrane proximal region regions lie at residues 733 to 786 and 765 to 785; these read IDSV…SFIN and TLVLGAAGAVVSTVSGIASFI. The helical transmembrane segment at 789–809 threads the bilayer; sequence FGGLAIGLLVIAGLVAAFFAY. The Intravirion segment spans residues 810–919; sequence RYVMQLRSNP…DDPMESEKMV (110 aa). Residues 864–867 carry the Golgi targeting motif; that stretch reads YMSM. A disordered region spans residues 900–919; that stretch reads RGPKYTRLREDDPMESEKMV. The Internalization motif motif lies at 904–907; that stretch reads YTRL. The segment covering 906 to 919 has biased composition (basic and acidic residues); sequence RLREDDPMESEKMV.

It belongs to the herpesviridae glycoprotein B family. As to quaternary structure, homotrimer; disulfide-linked. Binds to heparan sulfate proteoglycans. Interacts with gH/gL heterodimer. In terms of processing, a proteolytic cleavage by host furin generates two subunits that remain linked by disulfide bonds.

It localises to the virion membrane. The protein resides in the host cell membrane. Its subcellular location is the host endosome membrane. It is found in the host Golgi apparatus membrane. Its function is as follows. Envelope glycoprotein that forms spikes at the surface of virion envelope. Essential for the initial attachment to heparan sulfate moieties of the host cell surface proteoglycans. Involved in fusion of viral and cellular membranes leading to virus entry into the host cell. Following initial binding to its host receptors, membrane fusion is mediated by the fusion machinery composed at least of gB and the heterodimer gH/gL. May be involved in the fusion between the virion envelope and the outer nuclear membrane during virion egress. The chain is Envelope glycoprotein B from Equus caballus (Horse).